Here is a 132-residue protein sequence, read N- to C-terminus: Fatty acid-binding protein 1 (132 aa).

Alanine 2 carries the N-acetylalanine modification.

It belongs to the calycin superfamily. Fatty-acid binding protein (FABP) family.

The chain is Fatty acid-binding protein 1 (FABP-1) from Fasciola gigantica (Giant liver fluke).